The following is a 217-amino-acid chain: MAHRVEQDYDYLFKIVLIGDSGVGKTNILSRFTRNEFCLESKSTIGVEFATRTLQVEGKTVKAQIWDTAGQERYRAITSAYYRGAVGALLVYDITKRQTFDNVLRWLRELRDHADSNIVIMMAGNKADLNHLRSVAEEDGQTLAETEGLSFLETSALEATNVEKAFQTVLAEIYHIISKKALAAQEAAAANSAIPGQGTTINVEDTSGAGKRGCCST.

19 to 26 (GDSGVGKT) lines the GTP pocket. The Effector region motif lies at 41 to 49 (SKSTIGVEF). GTP-binding positions include 67 to 71 (DTAGQ), 125 to 128 (NKAD), and 155 to 156 (SA). The interval 196–217 (GQGTTINVEDTSGAGKRGCCST) is disordered. 2 S-geranylgeranyl cysteine lipidation sites follow: Cys-214 and Cys-215.

This sequence belongs to the small GTPase superfamily. Rab family. In terms of tissue distribution, expressed in root tips.

It is found in the endosome membrane. It localises to the golgi apparatus. The protein localises to the trans-Golgi network membrane. Functionally, intracellular vesicle trafficking and protein transport. This is Ras-related protein RABA2d (RABA2D) from Arabidopsis thaliana (Mouse-ear cress).